The following is a 196-amino-acid chain: Small nuclear ribonucleoprotein-associated protein B (196 aa).

The 95-residue stretch at 7–101 (AHSSRLANLI…ILSTVVEDKP (95 aa)) folds into the Sm domain. The Nuclear localization signal signature appears at 105 to 132 (KKERLVRDKKEKKQAQKQTKLRKEKEKK). Residues 108 to 118 (RLVRDKKEKKQ) show a composition bias toward basic and acidic residues. The segment at 108–196 (RLVRDKKEKK…FQPPPGFKRK (89 aa)) is disordered. Polar residues predominate over residues 140-181 (NTANAKHTSSNSREIAQPSSSRYNGGNDNIGANRSRFNNEAP).

This sequence belongs to the snRNP SmB/SmN family. Component of the Sm core complex, present in spliceosomal snRNP U1, U2, U4/U6 and U5. The core complex contains SMB1, SMD1, SMD2, SMD3, SME1, SMX3 and SMX2 (Sm proteins B, D1, D2, D3, E, F and G, respectively), and is probably a heptameric ring structure. SMB1 specifically interacts with SMD3. Belongs to the CWC complex (or CEF1-associated complex), a spliceosome sub-complex reminiscent of a late-stage spliceosome composed of the U2, U5 and U6 snRNAs and at least BUD13, BUD31, BRR2, CDC40, CEF1, CLF1, CUS1, CWC2, CWC15, CWC21, CWC22, CWC23, CWC24, CWC25, CWC27, ECM2, HSH155, IST3, ISY1, LEA1, MSL1, NTC20, PRP8, PRP9, PRP11, PRP19, PRP21, PRP22, PRP45, PRP46, SLU7, SMB1, SMD1, SMD2, SMD3, SMX2, SMX3, SNT309, SNU114, SPP2, SYF1, SYF2, RSE1 and YJU2. Component of the U4/U6-U5 tri-snRNP complex composed of the U4, U6 and U5 snRNAs and at least PRP3, PRP4, PRP6, PRP8, PRP18, PRP38, SNU13, SNU23, SNU66, SNU114, SPP381, SMB1, SMD1, SMD2, SMD3, SMX2, SMX3, LSM2, LSM3, LSM4, LSM5, LSM6, LSM7, LSM8, BRR2 and DIB1. Interacts with the trimethylguanosine synthase TGS1.

The protein localises to the nucleus. It is found in the cytoplasm. In terms of biological role, plays a role in pre-mRNA splicing as a core component of the spliceosomal U1, U2, U4 and U5 small nuclear ribonucleoproteins (snRNPs), the building blocks of the spliceosome. The chain is Small nuclear ribonucleoprotein-associated protein B (SMB1) from Saccharomyces cerevisiae (strain ATCC 204508 / S288c) (Baker's yeast).